A 1240-amino-acid polypeptide reads, in one-letter code: Neurofascin (1240 aa).

A signal peptide spans 1-24 (MARQQAPPWVHIALILFLLSLGGA). The Extracellular segment spans residues 25-1110 (IEIPMDPSIQ…NQADIATQGW (1086 aa)). 6 consecutive Ig-like C2-type domains span residues 41–137 (PTIT…LQVS), 143–230 (PKEN…NPFT), 244–332 (PSFM…ISVR), 337–424 (PYWL…AFVS), 430–517 (PRML…VRLE), and 521–603 (PTRI…QDLA). Disulfide bonds link C63–C118, C162–C213, C268–C316, and C358–C408. N305 is a glycosylation site (N-linked (GlcNAc...) asparagine). N409 and N446 each carry an N-linked (GlcNAc...) asparagine glycan. 2 disulfide bridges follow: C452–C501 and C543–C592. At Y481 the chain carries Phosphotyrosine. N-linked (GlcNAc...) asparagine glycosylation occurs at N483. The residue at position 485 (S485) is a Phosphoserine. 4 Fibronectin type-III domains span residues 630–725 (RPRD…TSGA), 727–823 (PESN…SGED), 827–923 (APRR…PNEA), and 1007–1099 (APDE…TAYT). The segment at 710-740 (SSHPSLPSERYRTSGAPPESNPSDVKGEGTR) is disordered. 4 N-linked (GlcNAc...) asparagine glycosylation sites follow: N752, N778, N866, and N881. Positions 902–942 (ARTQVGSGEAATEESPAPPNEATPTAAPPTLPPTTVGTTGL) are disordered. Low complexity predominate over residues 907–916 (GSGEAATEES). The segment covering 917–933 (PAPPNEATPTAAPPTLP) has biased composition (pro residues). The chain crosses the membrane as a helical span at residues 1111–1131 (FIGLMCAIALLVLILLIVCFI). Over 1132–1240 (KRSRGGKYPV…SPVNAIYSLA (109 aa)) the chain is Cytoplasmic. The interval 1141–1240 (VREKKDVPLG…SPVNAIYSLA (100 aa)) is disordered. The segment covering 1154–1165 (PKEEDGSFDYSD) has biased composition (acidic residues). S1160, S1174, S1187, S1190, S1226, S1227, and S1231 each carry phosphoserine. The segment covering 1171-1184 (LQGSQTSLDGTIKQ) has biased composition (polar residues).

This sequence belongs to the immunoglobulin superfamily. L1/neurofascin/NgCAM family. Horseshoe-shaped homodimer. Probable constituent of a NFASC/NRCAM/ankyrin-G complex. Associates with the sodium channel beta-1 (SCN1B) and beta-3 (SCN3B) subunits. Interacts with GLDN/gliomedin. Interacts with MYOC.

It is found in the cell membrane. In terms of biological role, cell adhesion, ankyrin-binding protein which may be involved in neurite extension, axonal guidance, synaptogenesis, myelination and neuron-glial cell interactions. The polypeptide is Neurofascin (Nfasc) (Mus musculus (Mouse)).